We begin with the raw amino-acid sequence, 63 residues long: Cecropin-A2 (63 aa).

Residues 1–23 (MNFYNIFVFVALILAITIGQSEA) form the signal peptide. Arg-62 carries the post-translational modification Arginine amide.

It belongs to the cecropin family. In terms of tissue distribution, strongly expressed in larval, pupal and adult fat body and hemocytes after injection of bacteria. Maximal expression in the adult involves fat body cells of the head, thorax and abdomen.

The protein localises to the secreted. Functionally, cecropins have lytic and antibacterial activity against several Gram-positive and Gram-negative bacteria. In Drosophila melanogaster (Fruit fly), this protein is Cecropin-A2.